The sequence spans 292 residues: Diaminopimelate epimerase (292 aa).

Substrate-binding residues include asparagine 13, glutamine 46, and asparagine 66. Residue cysteine 75 is the Proton donor of the active site. Substrate-binding positions include glycine 76 to asparagine 77, asparagine 170, asparagine 203, and glutamate 221 to arginine 222. Cysteine 230 acts as the Proton acceptor in catalysis. Residue glycine 231–threonine 232 participates in substrate binding.

The protein belongs to the diaminopimelate epimerase family. Homodimer.

It localises to the cytoplasm. The catalysed reaction is (2S,6S)-2,6-diaminopimelate = meso-2,6-diaminopimelate. It participates in amino-acid biosynthesis; L-lysine biosynthesis via DAP pathway; DL-2,6-diaminopimelate from LL-2,6-diaminopimelate: step 1/1. Functionally, catalyzes the stereoinversion of LL-2,6-diaminopimelate (L,L-DAP) to meso-diaminopimelate (meso-DAP), a precursor of L-lysine and an essential component of the bacterial peptidoglycan. This is Diaminopimelate epimerase from Acidovorax ebreus (strain TPSY) (Diaphorobacter sp. (strain TPSY)).